We begin with the raw amino-acid sequence, 559 residues long: Dihydroxy-acid dehydratase (559 aa).

Position 78 (Asp-78) interacts with Mg(2+). Cys-119 is a binding site for [2Fe-2S] cluster. Mg(2+) is bound by residues Asp-120 and Lys-121. At Lys-121 the chain carries N6-carboxylysine. Cys-191 contacts [2Fe-2S] cluster. Glu-442 contacts Mg(2+). The Proton acceptor role is filled by Ser-468.

It belongs to the IlvD/Edd family. Homodimer. It depends on [2Fe-2S] cluster as a cofactor. Mg(2+) is required as a cofactor.

The catalysed reaction is (2R)-2,3-dihydroxy-3-methylbutanoate = 3-methyl-2-oxobutanoate + H2O. It carries out the reaction (2R,3R)-2,3-dihydroxy-3-methylpentanoate = (S)-3-methyl-2-oxopentanoate + H2O. Its pathway is amino-acid biosynthesis; L-isoleucine biosynthesis; L-isoleucine from 2-oxobutanoate: step 3/4. It functions in the pathway amino-acid biosynthesis; L-valine biosynthesis; L-valine from pyruvate: step 3/4. Its function is as follows. Functions in the biosynthesis of branched-chain amino acids. Catalyzes the dehydration of (2R,3R)-2,3-dihydroxy-3-methylpentanoate (2,3-dihydroxy-3-methylvalerate) into 2-oxo-3-methylpentanoate (2-oxo-3-methylvalerate) and of (2R)-2,3-dihydroxy-3-methylbutanoate (2,3-dihydroxyisovalerate) into 2-oxo-3-methylbutanoate (2-oxoisovalerate), the penultimate precursor to L-isoleucine and L-valine, respectively. The sequence is that of Dihydroxy-acid dehydratase from Agathobacter rectalis (strain ATCC 33656 / DSM 3377 / JCM 17463 / KCTC 5835 / VPI 0990) (Eubacterium rectale).